A 213-amino-acid chain; its full sequence is Reticulon-3 (213 aa).

Positions 1 to 16 are enriched in polar residues; the sequence is MADTSGPQSSHISSSA. The disordered stretch occupies residues 1–20; that stretch reads MADTSGPQSSHISSSAGEKG. Positions 25–213 constitute a Reticulon domain; sequence VQDLLYWRDV…LPGALKKKSE (189 aa). The next 2 helical transmembrane spans lie at 45-65 and 154-174; these read MVLL…YLVL and VFNG…APIV.

Homodimer.

The protein localises to the endoplasmic reticulum membrane. It localises to the golgi apparatus membrane. Functionally, may be involved in membrane trafficking in the early secretory pathway. This Xenopus tropicalis (Western clawed frog) protein is Reticulon-3 (rtn3).